Consider the following 370-residue polypeptide: Anhydro-N-acetylmuramic acid kinase (370 aa).

ATP is bound at residue 12 to 19; the sequence is GTSLDGVD.

Belongs to the anhydro-N-acetylmuramic acid kinase family.

The enzyme catalyses 1,6-anhydro-N-acetyl-beta-muramate + ATP + H2O = N-acetyl-D-muramate 6-phosphate + ADP + H(+). It functions in the pathway amino-sugar metabolism; 1,6-anhydro-N-acetylmuramate degradation. Its pathway is cell wall biogenesis; peptidoglycan recycling. Its function is as follows. Catalyzes the specific phosphorylation of 1,6-anhydro-N-acetylmuramic acid (anhMurNAc) with the simultaneous cleavage of the 1,6-anhydro ring, generating MurNAc-6-P. Is required for the utilization of anhMurNAc either imported from the medium or derived from its own cell wall murein, and thus plays a role in cell wall recycling. This chain is Anhydro-N-acetylmuramic acid kinase, found in Proteus mirabilis (strain HI4320).